Here is a 572-residue protein sequence, read N- to C-terminus: Proline--tRNA ligase (572 aa).

This sequence belongs to the class-II aminoacyl-tRNA synthetase family. ProS type 1 subfamily. In terms of assembly, homodimer.

It is found in the cytoplasm. It catalyses the reaction tRNA(Pro) + L-proline + ATP = L-prolyl-tRNA(Pro) + AMP + diphosphate. Functionally, catalyzes the attachment of proline to tRNA(Pro) in a two-step reaction: proline is first activated by ATP to form Pro-AMP and then transferred to the acceptor end of tRNA(Pro). As ProRS can inadvertently accommodate and process non-cognate amino acids such as alanine and cysteine, to avoid such errors it has two additional distinct editing activities against alanine. One activity is designated as 'pretransfer' editing and involves the tRNA(Pro)-independent hydrolysis of activated Ala-AMP. The other activity is designated 'posttransfer' editing and involves deacylation of mischarged Ala-tRNA(Pro). The misacylated Cys-tRNA(Pro) is not edited by ProRS. The sequence is that of Proline--tRNA ligase from Enterobacter sp. (strain 638).